The following is a 181-amino-acid chain: Methanesulfonate monooxygenase hydroxylase subunit beta (181 aa).

It belongs to the bacterial ring-hydroxylating dioxygenase beta subunit family. As to quaternary structure, the MSA monooxygenase system consists of 4 proteins: the 2 subunits of the hydroxylase component (MsmA and MsmB), a ferredoxin (MsmC) and a ferredoxin reductase (MsmD). The hydroxylase component consists of a 3 alpha (MsmA) and 3 beta (MsmB) subunits.

The protein resides in the cytoplasm. It catalyses the reaction methanesulfonate + NADH + O2 = sulfite + formaldehyde + NAD(+) + H2O. MSAMO is inhibited by metal chelators (such as bathophenanthroline, bathocuprione, neocuprione, alpha-alpha-dipyridil and sodium EDTA) and by sodium azide, sodium arsenate and potassium cyanide. Functionally, methanesulfonate monooxygenase (MSAMO) mediates the primary degradation of methanesulfonic acid (MSA) to produce formaldehyd and inorganic sulfite by initial hydroxylation of the carbon atom prior to spontaneous cleavage of the unstable hydroxymethanesulfonic acid. MSAMO has a restricted substrate range that includes only the short-chain aliphatic sulfonates (methane- to butanesulfonate) and excludes all larger molecules, such as arylsulfonates and aromatic sulfonates. All MSAMO components are required for enzyme activity. The chain is Methanesulfonate monooxygenase hydroxylase subunit beta from Methylosulfonomonas methylovora.